The chain runs to 338 residues: Cinnamoyl-CoA reductase 1 (338 aa).

NADP(+) contacts are provided by residues 22-28, R47, K53, 73-74, 93-95, Y165, K169, 192-195, and S207; these read GAGGFIG, DV, VAS, and PSMT. The cysteines at positions 158 and 166 are disulfide-linked. K169 serves as the catalytic Proton donor.

Belongs to the NAD(P)-dependent epimerase/dehydratase family. Dihydroflavonol-4-reductase subfamily. Interacts with RAC1 in a GTP-dependent manner.

The protein resides in the cytoplasm. It catalyses the reaction (E)-cinnamaldehyde + NADP(+) + CoA = (E)-cinnamoyl-CoA + NADPH + H(+). It participates in aromatic compound metabolism; phenylpropanoid biosynthesis. Its activity is regulated as follows. Activated by the small GTPase RAC1. Its function is as follows. Involved in the latter stages of lignin biosynthesis. Catalyzes one of the last steps of monolignol biosynthesis, the conversion of cinnamoyl-CoAs into their corresponding cinnamaldehydes. Probably involved in the formation of lignin in defense responses. This Oryza sativa subsp. japonica (Rice) protein is Cinnamoyl-CoA reductase 1.